We begin with the raw amino-acid sequence, 251 residues long: Probable transcriptional regulatory protein Swol_1435 (251 aa).

Positions 1–23 are disordered; the sequence is MAGHSKWANIKHKKARSDEKRGK.

Belongs to the TACO1 family.

It localises to the cytoplasm. The chain is Probable transcriptional regulatory protein Swol_1435 from Syntrophomonas wolfei subsp. wolfei (strain DSM 2245B / Goettingen).